The primary structure comprises 96 residues: Protein RnfH (96 aa).

It belongs to the UPF0125 (RnfH) family.

The chain is Protein RnfH from Cronobacter sakazakii (strain ATCC BAA-894) (Enterobacter sakazakii).